The chain runs to 56 residues: MAVQKSKKSRSMRGMRRSHDALTTSAVSVDATSGETHLRHNVTADGYYRGRKVINK.

The span at 1–16 (MAVQKSKKSRSMRGMR) shows a compositional bias: basic residues. The tract at residues 1–33 (MAVQKSKKSRSMRGMRRSHDALTTSAVSVDATS) is disordered. A compositionally biased stretch (polar residues) spans 21–33 (ALTTSAVSVDATS).

Belongs to the bacterial ribosomal protein bL32 family.

The protein is Large ribosomal subunit protein bL32 of Aliivibrio fischeri (strain ATCC 700601 / ES114) (Vibrio fischeri).